Consider the following 907-residue polypeptide: Protein translocase subunit SecA (907 aa).

ATP-binding positions include Gln-87, 105 to 109, and Asp-510; that span reads GEGKT. Zn(2+)-binding residues include Cys-892, Cys-894, Cys-903, and His-904.

The protein belongs to the SecA family. Monomer and homodimer. Part of the essential Sec protein translocation apparatus which comprises SecA, SecYEG and auxiliary proteins SecDF-YajC and YidC. Zn(2+) is required as a cofactor.

It is found in the cell inner membrane. The protein localises to the cytoplasm. It catalyses the reaction ATP + H2O + cellular proteinSide 1 = ADP + phosphate + cellular proteinSide 2.. Part of the Sec protein translocase complex. Interacts with the SecYEG preprotein conducting channel. Has a central role in coupling the hydrolysis of ATP to the transfer of proteins into and across the cell membrane, serving both as a receptor for the preprotein-SecB complex and as an ATP-driven molecular motor driving the stepwise translocation of polypeptide chains across the membrane. This chain is Protein translocase subunit SecA, found in Acinetobacter baumannii (strain ACICU).